The sequence spans 329 residues: Ribosomal RNA small subunit methyltransferase H (329 aa).

S-adenosyl-L-methionine is bound by residues 34 to 36 (GGY), Asp-52, Phe-79, Asp-100, and Gln-107. A disordered region spans residues 285-329 (GEDEVAHNPRARSAKLRAAERTSAPAHKDDQSSSWPRLSDVMRGG).

Belongs to the methyltransferase superfamily. RsmH family.

It is found in the cytoplasm. The catalysed reaction is cytidine(1402) in 16S rRNA + S-adenosyl-L-methionine = N(4)-methylcytidine(1402) in 16S rRNA + S-adenosyl-L-homocysteine + H(+). In terms of biological role, specifically methylates the N4 position of cytidine in position 1402 (C1402) of 16S rRNA. In Bradyrhizobium diazoefficiens (strain JCM 10833 / BCRC 13528 / IAM 13628 / NBRC 14792 / USDA 110), this protein is Ribosomal RNA small subunit methyltransferase H.